We begin with the raw amino-acid sequence, 857 residues long: Cation/H(+) antiporter 25 (857 aa).

The next 11 membrane-spanning stretches (helical) occupy residues 65-85, 93-110, 122-142, 161-181, 194-214, 227-247, 259-279, 313-333, 385-405, 413-435, and 447-467; these read FSTF…VYVL, RIVC…SMLG, PIAN…FFFL, YIAA…GAAL, SIGG…YTVL, FAMS…VLFE, YSVI…LLVV, FLTD…GLVV, IYMS…AALF, SLTL…LHWI, and VMVL…SFLY. Ser855 carries the phosphoserine modification.

The protein belongs to the monovalent cation:proton antiporter 2 (CPA2) transporter (TC 2.A.37) family. CHX (TC 2.A.37.4) subfamily. Specifically expressed in pollen.

The protein resides in the membrane. Functionally, may operate as a cation/H(+) antiporter. The polypeptide is Cation/H(+) antiporter 25 (CHX25) (Arabidopsis thaliana (Mouse-ear cress)).